A 56-amino-acid chain; its full sequence is Large ribosomal subunit protein eL37 (56 aa).

Residues Cys19, Cys22, Cys34, and Cys37 each contribute to the Zn(2+) site. Residues 19–37 (CRRCGRLSYNFNRKTCVAC) form a C4-type zinc finger.

The protein belongs to the eukaryotic ribosomal protein eL37 family. The cofactor is Zn(2+).

Its function is as follows. Binds to the 23S rRNA. This is Large ribosomal subunit protein eL37 from Methanothrix thermoacetophila (strain DSM 6194 / JCM 14653 / NBRC 101360 / PT) (Methanosaeta thermophila).